Consider the following 339-residue polypeptide: DNA-directed RNA polymerase subunit alpha (339 aa).

Residues 1 to 233 form an alpha N-terminal domain (alpha-NTD) region; sequence MVREEVAGST…DLFLPFLHAE (233 aa). Residues 264 to 339 are alpha C-terminal domain (alpha-CTD); sequence KKGIPLNCIF…IDLLKNKLSF (76 aa).

Belongs to the RNA polymerase alpha chain family. In plastids the minimal PEP RNA polymerase catalytic core is composed of four subunits: alpha, beta, beta', and beta''. When a (nuclear-encoded) sigma factor is associated with the core the holoenzyme is formed, which can initiate transcription.

The protein resides in the plastid. The protein localises to the chloroplast. It carries out the reaction RNA(n) + a ribonucleoside 5'-triphosphate = RNA(n+1) + diphosphate. DNA-dependent RNA polymerase catalyzes the transcription of DNA into RNA using the four ribonucleoside triphosphates as substrates. The chain is DNA-directed RNA polymerase subunit alpha from Elymus hystrix (Eastern bottlebrush grass).